Consider the following 608-residue polypeptide: Zinc finger protein 652 (608 aa).

At serine 57 the chain carries Phosphoserine. Residues 61–232 (VLADTKMSKP…KRATKEAKAP (172 aa)) are disordered. Positions 71–97 (HLHETEEQPYFREPRAVSDVHTVKEDR) are enriched in basic and acidic residues. Acidic residues-rich tracts occupy residues 98 to 108 (ENSDDTEEEEE) and 151 to 162 (EEDEEETEEEAT). Residue serine 100 is modified to Phosphoserine. Phosphothreonine is present on threonine 103. A compositionally biased stretch (low complexity) spans 194–208 (AASAAAATTSPAPRT). A phosphoserine mark is found at serine 196 and serine 203. A C2H2-type 1 zinc finger spans residues 244-267 (LTCEKCPRVFNTRWYLEKHMNVTH). A C2H2-type 2; degenerate zinc finger spans residues 271–293 (QICDKCGKKFVLESELSLHQQTD). 6 C2H2-type zinc fingers span residues 298–321 (IQCV…KIVH), 328–350 (FACE…MVAH), 356–378 (FTCE…SLQH), 384–406 (FRCE…MSIH), 412–434 (FMCQ…MKTH), and 440–462 (FICE…RRTH). A C2H2-type 9; degenerate zinc finger spans residues 468-491 (YPCDVCGQRFRFSNMLKAHKEKCF). Positions 497–608 (VNVPPAVQIP…KNSAAPAQHH (112 aa)) are mediates interaction with CBFA2T3.

Belongs to the krueppel C2H2-type zinc-finger protein family. As to quaternary structure, interacts with CBFA2T3.

It is found in the nucleus. Functionally, functions as a transcriptional repressor. The sequence is that of Zinc finger protein 652 (Znf652) from Mus musculus (Mouse).